The sequence spans 387 residues: MTPTELNLKAKALLETHFDDIVLSGEISKITLHGSGHWYFDLKDERSSIACAMFKGANLKVGFKPAVGNFLELCGSVSLYPESGRYQFIATSMKKAGFGDLEAQFLALKERLQKEGLFDPRFKKSLPKFPKKVGIITSKTSAALQDMLKLIHQKEYFLAKIYIFDALTQGNNAPFSLIRALKKADDMDLDVLIIARGGGSREDLFCFNDENLAREIFKAKTPIISAIGHEIDYVISDFVADFRAPTPSAAIDTLFYSKLDIEQSLDLMEEKLMQLWNYKIQNYENLLLNLSKFFKFNSLPKIIDEKIKQSHNIEKQLNHLLANQMRYNELKLDKLQNAYLQHENFFNKSKKFICIRKNGKIANLEDLKSDDIVILSSQTSQKEAKIL.

The protein belongs to the XseA family. Heterooligomer composed of large and small subunits.

It localises to the cytoplasm. It catalyses the reaction Exonucleolytic cleavage in either 5'- to 3'- or 3'- to 5'-direction to yield nucleoside 5'-phosphates.. In terms of biological role, bidirectionally degrades single-stranded DNA into large acid-insoluble oligonucleotides, which are then degraded further into small acid-soluble oligonucleotides. The chain is Exodeoxyribonuclease 7 large subunit from Campylobacter jejuni (strain RM1221).